We begin with the raw amino-acid sequence, 301 residues long: Putative S-adenosyl-L-methionine-dependent methyltransferase MAP_3777 (301 aa).

Residues D126 and 155-156 contribute to the S-adenosyl-L-methionine site; that span reads DL.

This sequence belongs to the UPF0677 family.

Exhibits S-adenosyl-L-methionine-dependent methyltransferase activity. The polypeptide is Putative S-adenosyl-L-methionine-dependent methyltransferase MAP_3777 (Mycolicibacterium paratuberculosis (strain ATCC BAA-968 / K-10) (Mycobacterium paratuberculosis)).